The following is a 505-amino-acid chain: Probable alpha-L-arabinofuranosidase C (505 aa).

Asparagine 81, asparagine 152, asparagine 269, and asparagine 438 each carry an N-linked (GlcNAc...) asparagine glycan.

Belongs to the glycosyl hydrolase 51 family.

It localises to the secreted. It catalyses the reaction Hydrolysis of terminal non-reducing alpha-L-arabinofuranoside residues in alpha-L-arabinosides.. The protein operates within glycan metabolism; L-arabinan degradation. Functionally, alpha-L-arabinofuranosidase involved in the degradation of arabinoxylan, a major component of plant hemicellulose. Acts only on small linear 1,5-alpha-linked L-arabinofuranosyl oligosaccharides. This is Probable alpha-L-arabinofuranosidase C (abfC) from Aspergillus fumigatus (strain ATCC MYA-4609 / CBS 101355 / FGSC A1100 / Af293) (Neosartorya fumigata).